The primary structure comprises 345 residues: tRNA dimethylallyltransferase (345 aa).

9–16 (GPTASGKS) contributes to the ATP binding site. Position 11–16 (11–16 (TASGKS)) interacts with substrate. Interaction with substrate tRNA regions lie at residues 34-37 (DSMQ) and 195-199 (QRMIR).

This sequence belongs to the IPP transferase family. As to quaternary structure, monomer. Mg(2+) serves as cofactor.

The catalysed reaction is adenosine(37) in tRNA + dimethylallyl diphosphate = N(6)-dimethylallyladenosine(37) in tRNA + diphosphate. Catalyzes the transfer of a dimethylallyl group onto the adenine at position 37 in tRNAs that read codons beginning with uridine, leading to the formation of N6-(dimethylallyl)adenosine (i(6)A). This chain is tRNA dimethylallyltransferase, found in Orientia tsutsugamushi (strain Boryong) (Rickettsia tsutsugamushi).